The sequence spans 439 residues: MGNKLHIVSLGCTKNLVDTEVMMGKLQNFELTDNQSDADVIIVNTCGFIDAAKQESINTVLNLHDARKEDSVLVMAGCLSERYKEELAKDMPEVDIFTGVGDYDKIDELLVEKKSRFSEAVYLIDGAERVVTGSTYHAYIKLSEGCNQTCSFCAIPSFKGKLNSRTLDSIAKEVESLVKKGYWDFSFVSQDSSSYLRDKNVKDGLSLLIQRVELIEGVKSARILYLYPSTTSMALLKNIAKSEIFHNYFDMPIQHINDDMLRIMKRGFGKKQTLELLEFMKSLPNSFIRTSFIVGHPGESQEMFDEMCKFASSFGFERINVFAYSDEETTPAHEMSDKIAAKVINKRASILGKIAADVMQASLKKEIGKETLLVIDKESDEHEYLLSARKILWAPDIDGEIYVNDRSGEEELNFGAIYNAEITDMVGNILTATTKNASR.

Residues 3–115 form the MTTase N-terminal domain; it reads NKLHIVSLGC…IDELLVEKKS (113 aa). 6 residues coordinate [4Fe-4S] cluster: Cys12, Cys46, Cys78, Cys146, Cys150, and Cys153. One can recognise a Radical SAM core domain in the interval 132 to 361; the sequence is TGSTYHAYIK…GKIAADVMQA (230 aa).

It belongs to the methylthiotransferase family. RimO subfamily. Requires [4Fe-4S] cluster as cofactor.

The protein resides in the cytoplasm. The enzyme catalyses L-aspartate(89)-[ribosomal protein uS12]-hydrogen + (sulfur carrier)-SH + AH2 + 2 S-adenosyl-L-methionine = 3-methylsulfanyl-L-aspartate(89)-[ribosomal protein uS12]-hydrogen + (sulfur carrier)-H + 5'-deoxyadenosine + L-methionine + A + S-adenosyl-L-homocysteine + 2 H(+). Catalyzes the methylthiolation of an aspartic acid residue of ribosomal protein uS12. The sequence is that of Ribosomal protein uS12 methylthiotransferase RimO from Sulfurimonas denitrificans (strain ATCC 33889 / DSM 1251) (Thiomicrospira denitrificans (strain ATCC 33889 / DSM 1251)).